We begin with the raw amino-acid sequence, 388 residues long: Processive diacylglycerol beta-glucosyltransferase (388 aa).

Belongs to the glycosyltransferase 28 family. UgtP subfamily.

It is found in the cell membrane. The enzyme catalyses a 1,2-diacyl-3-O-(beta-D-glucopyranosyl)-sn-glycerol + UDP-alpha-D-glucose = a 1,2-diacyl-3-O-(beta-D-Glc-(1-&gt;6)-beta-D-Glc)-sn-glycerol + UDP + H(+). The catalysed reaction is a 1,2-diacyl-3-O-(beta-D-Glc-(1-&gt;6)-beta-D-Glc)-sn-glycerol + UDP-alpha-D-glucose = a 1,2-diacyl-3-O-(beta-D-Glc-(1-&gt;6)-beta-D-Glc-(1-&gt;6)-beta-D-Glc)-sn-glycerol + UDP + H(+). It catalyses the reaction a 1,2-diacyl-sn-glycerol + UDP-alpha-D-glucose = a 1,2-diacyl-3-O-(beta-D-glucopyranosyl)-sn-glycerol + UDP + H(+). Its pathway is glycolipid metabolism; diglucosyl-diacylglycerol biosynthesis. Its function is as follows. Processive glucosyltransferase involved in the biosynthesis of both the bilayer- and non-bilayer-forming membrane glucolipids. Is able to successively transfer up to three glucosyl residues to diacylglycerol (DAG), thereby catalyzing the formation of beta-monoglucosyl-DAG (3-O-(beta-D-glucopyranosyl)-1,2-diacyl-sn-glycerol), beta-diglucosyl-DAG (3-O-(beta-D-glucopyranosyl-beta-(1-&gt;6)-D-glucopyranosyl)-1,2-diacyl-sn-glycerol) and beta-triglucosyl-DAG (3-O-(beta-D-glucopyranosyl-beta-(1-&gt;6)-D-glucopyranosyl-beta-(1-&gt;6)-D-glucopyranosyl)-1,2-diacyl-sn-glycerol). Beta-diglucosyl-DAG is the predominant glycolipid found in Bacillales and is also used as a membrane anchor for lipoteichoic acid (LTA). In Bacillus anthracis (strain A0248), this protein is Processive diacylglycerol beta-glucosyltransferase.